The chain runs to 180 residues: ATP-dependent protease subunit HslV (180 aa).

Thr-7 is a catalytic residue. 3 residues coordinate Na(+): Ala-162, Cys-165, and Thr-168.

This sequence belongs to the peptidase T1B family. HslV subfamily. In terms of assembly, a double ring-shaped homohexamer of HslV is capped on each side by a ring-shaped HslU homohexamer. The assembly of the HslU/HslV complex is dependent on binding of ATP.

The protein resides in the cytoplasm. The catalysed reaction is ATP-dependent cleavage of peptide bonds with broad specificity.. With respect to regulation, allosterically activated by HslU binding. In terms of biological role, protease subunit of a proteasome-like degradation complex believed to be a general protein degrading machinery. The chain is ATP-dependent protease subunit HslV from Dichelobacter nodosus (strain VCS1703A).